A 161-amino-acid chain; its full sequence is RNA pyrophosphohydrolase (161 aa).

The region spanning 6-149 (GYRPNVGIIL…KREVYRRAMR (144 aa)) is the Nudix hydrolase domain. Residues 38 to 59 (GGIKKDESPEEALFRELKEEVG) carry the Nudix box motif.

This sequence belongs to the Nudix hydrolase family. RppH subfamily. Requires a divalent metal cation as cofactor.

Functionally, accelerates the degradation of transcripts by removing pyrophosphate from the 5'-end of triphosphorylated RNA, leading to a more labile monophosphorylated state that can stimulate subsequent ribonuclease cleavage. The sequence is that of RNA pyrophosphohydrolase from Hahella chejuensis (strain KCTC 2396).